The following is a 304-amino-acid chain: Ribonuclease Z (304 aa).

Zn(2+) is bound by residues His-63, His-65, Asp-67, His-68, His-141, Asp-208, and His-266. Asp-67 serves as the catalytic Proton acceptor.

It belongs to the RNase Z family. Homodimer. Zn(2+) is required as a cofactor.

The catalysed reaction is Endonucleolytic cleavage of RNA, removing extra 3' nucleotides from tRNA precursor, generating 3' termini of tRNAs. A 3'-hydroxy group is left at the tRNA terminus and a 5'-phosphoryl group is left at the trailer molecule.. Its function is as follows. Zinc phosphodiesterase, which displays some tRNA 3'-processing endonuclease activity. Probably involved in tRNA maturation, by removing a 3'-trailer from precursor tRNA. The sequence is that of Ribonuclease Z from Chlamydia trachomatis serovar L2 (strain ATCC VR-902B / DSM 19102 / 434/Bu).